The chain runs to 620 residues: Endoglucanase 10 (620 aa).

The interval 1-26 (MFGRDPWGGPLEISNADSATDDDRSR) is disordered. Residues 72-92 (IFMWTVGTILGVGLFIGFVMM) traverse the membrane as a helical; Signal-anchor for type II membrane protein segment. D165 serves as the catalytic Nucleophile. 6 N-linked (GlcNAc...) asparagine glycosylation sites follow: N216, N314, N323, N344, N408, and N425. Residues H513 and D561 contribute to the active site. N567 carries an N-linked (GlcNAc...) asparagine glycan. E570 is an active-site residue.

The protein belongs to the glycosyl hydrolase 9 (cellulase E) family. As to expression, ubiquitous.

The protein resides in the membrane. It catalyses the reaction Endohydrolysis of (1-&gt;4)-beta-D-glucosidic linkages in cellulose, lichenin and cereal beta-D-glucans.. This chain is Endoglucanase 10 (GLU2), found in Oryza sativa subsp. japonica (Rice).